Here is a 236-residue protein sequence, read N- to C-terminus: 5'-methylthioadenosine/S-adenosylhomocysteine nucleosidase (236 aa).

Glutamate 12 (proton acceptor) is an active-site residue. Substrate is bound by residues glycine 78, methionine 153, and 174–175 (ME). The active-site Proton donor is the aspartate 198.

Belongs to the PNP/UDP phosphorylase family. MtnN subfamily.

It catalyses the reaction S-adenosyl-L-homocysteine + H2O = S-(5-deoxy-D-ribos-5-yl)-L-homocysteine + adenine. It carries out the reaction S-methyl-5'-thioadenosine + H2O = 5-(methylsulfanyl)-D-ribose + adenine. The catalysed reaction is 5'-deoxyadenosine + H2O = 5-deoxy-D-ribose + adenine. It functions in the pathway amino-acid biosynthesis; L-methionine biosynthesis via salvage pathway; S-methyl-5-thio-alpha-D-ribose 1-phosphate from S-methyl-5'-thioadenosine (hydrolase route): step 1/2. In terms of biological role, catalyzes the irreversible cleavage of the glycosidic bond in both 5'-methylthioadenosine (MTA) and S-adenosylhomocysteine (SAH/AdoHcy) to adenine and the corresponding thioribose, 5'-methylthioribose and S-ribosylhomocysteine, respectively. Also cleaves 5'-deoxyadenosine, a toxic by-product of radical S-adenosylmethionine (SAM) enzymes, into 5-deoxyribose and adenine. The polypeptide is 5'-methylthioadenosine/S-adenosylhomocysteine nucleosidase (Geobacillus thermodenitrificans (strain NG80-2)).